We begin with the raw amino-acid sequence, 513 residues long: Flavonoid 3',5'-hydroxylase (513 aa).

Heme is bound at residue Cys-446.

This sequence belongs to the cytochrome P450 family. It depends on heme as a cofactor. In terms of tissue distribution, hypocotyl tissues.

It carries out the reaction a 3',5'-unsubstituted flavanone + 2 reduced [NADPH--hemoprotein reductase] + 2 O2 = a 3',5'-dihydroxyflavanone + 2 oxidized [NADPH--hemoprotein reductase] + 2 H2O + 2 H(+). Its pathway is pigment biosynthesis; anthocyanin biosynthesis. Catalyzes the 3'5'-hydroxylation of naringenin and eriodictyol to form 5,7,3,'4',5'-pentahydroxyflavanone and 3',5'-hydroxylation of dihydrokaempferol and dihydroquercetin to form dihydromyricetin. The chain is Flavonoid 3',5'-hydroxylase (CYP75A2) from Solanum melongena (Eggplant).